The following is a 175-amino-acid chain: Adenine phosphoribosyltransferase (175 aa).

This sequence belongs to the purine/pyrimidine phosphoribosyltransferase family. As to quaternary structure, homodimer.

The protein resides in the cytoplasm. It catalyses the reaction AMP + diphosphate = 5-phospho-alpha-D-ribose 1-diphosphate + adenine. The protein operates within purine metabolism; AMP biosynthesis via salvage pathway; AMP from adenine: step 1/1. Catalyzes a salvage reaction resulting in the formation of AMP, that is energically less costly than de novo synthesis. This Pelagibacter ubique (strain HTCC1062) protein is Adenine phosphoribosyltransferase.